The sequence spans 406 residues: Fructose-1,6-bisphosphatase, chloroplastic (406 aa).

The N-terminal 47 residues, 1–47 (MAAAATTSSHLLLLSRQQAAASLQCGLSFRRQPGRLAGGSSAPSVRC), are a transit peptide targeting the chloroplast. Mg(2+) is bound by residues Glu-128, Glu-157, Asp-178, Leu-180, and Asp-181. 181-184 (DGSS) provides a ligand contact to substrate. An intrachain disulfide couples Cys-222 to Cys-227. Substrate contacts are provided by Asn-286, Tyr-318, Tyr-336, Tyr-338, and Lys-348. Glu-354 is a Mg(2+) binding site.

The protein belongs to the FBPase class 1 family. Homotetramer. Mg(2+) serves as cofactor.

The protein resides in the plastid. It localises to the chloroplast stroma. It catalyses the reaction beta-D-fructose 1,6-bisphosphate + H2O = beta-D-fructose 6-phosphate + phosphate. It functions in the pathway carbohydrate biosynthesis; Calvin cycle. Its activity is regulated as follows. Inhibited by sodium chloride. Functionally, catalyzes the irreversible reaction from fructose-1,6-bisphosphate to fructose-6-phosphate and inorganic phosphate, to regenerate the primary CO(2) acceptor molecule, ribulose-1,5-bisphosphate. Involved in the regulation of photosynthetic performance and sucrose synthesis. In Oryza sativa subsp. indica (Rice), this protein is Fructose-1,6-bisphosphatase, chloroplastic.